Reading from the N-terminus, the 699-residue chain is MGNMRSLVKTLMVVLFLGWILVWIMISTNLFKSKWTPKLSKYLNTTYFGPQGTNLVLLTVPMMFIAVLSCVYLHIQKKPTQPQREWKLKRIMGRVIMVMNPLGIVTATELTFSLLFVALLAWSLYNYLYLSYHVHLHNDDNAKIWQAKFRAFGLRIGYVGNICWAFLFFPVTRASTILPLVGLTSESSIKYHIWLGHVSNFCFLVHTVVFLIYWAMINKLMETFAWNPTYVPNLAGTIAMVIGIAMWVTSLPSFRRKKFEIFFYTHHLYGLYIVFYVIHVGDSWFCMILPNIFLFFIDRYLRFLQSTKRSRLVSARILPSDNLELTFSKTPGLHYTPTSILFLHVPSISKIQWHPFTITSSSNLEKDTLSVVIRRQGSWTQKLYTHLSSSIDSLEVSTEGPYGPNSFDVSRHNSLILVSGGSGITPFISVIRELISQSQNKSTKLPDVLLVCSFKHYHDLAFLDLIFPLDMSASDISRLNLRIEAYITREDKKPETTDDHRLLQTKWFKPQPLDSPISPVLGPNNFLWLGVVILSSFVMFLLLIGIVTRYYIYPVDHNTGSIYNFSYRGLWDMFLGSACIFISSSVVFLWRKKQNKEGDKEFKNQVQSVEFQTPTSSPGSWFHGHERELESVPYQSIVQATSVHFGSKPNLKKILLEAEGSEDVGVMVCGPRKMRHEVAKICSSGLAKNLHFEAISFNW.

The Cytoplasmic segment spans residues 1 to 9 (MGNMRSLVK). The chain crosses the membrane as a helical span at residues 10 to 29 (TLMVVLFLGWILVWIMISTN). The Lumenal segment spans residues 30–54 (LFKSKWTPKLSKYLNTTYFGPQGTN). The helical transmembrane segment at 55–73 (LVLLTVPMMFIAVLSCVYL) threads the bilayer. Topologically, residues 74–101 (HIQKKPTQPQREWKLKRIMGRVIMVMNP) are cytoplasmic. The chain crosses the membrane as a helical span at residues 102-125 (LGIVTATELTFSLLFVALLAWSLY). Over 126–190 (NYLYLSYHVH…VGLTSESSIK (65 aa)) the chain is Lumenal. The Ferric oxidoreductase domain maps to 157-275 (GYVGNICWAF…HHLYGLYIVF (119 aa)). A helical transmembrane segment spans residues 191-214 (YHIWLGHVSNFCFLVHTVVFLIYW). Heme contacts are provided by histidine 192 and histidine 206. Residues 215–264 (AMINKLMETFAWNPTYVPNLAGTIAMVIGIAMWVTSLPSFRRKKFEIFFY) lie on the Cytoplasmic side of the membrane. Residues 265-289 (THHLYGLYIVFYVIHVGDSWFCMIL) traverse the membrane as a helical segment. Heme is bound by residues histidine 266 and histidine 279. Topologically, residues 290–311 (PNIFLFFIDRYLRFLQSTKRSR) are lumenal. Positions 305-408 (QSTKRSRLVS…EGPYGPNSFD (104 aa)) constitute an FAD-binding FR-type domain. A helical transmembrane segment spans residues 312–332 (LVSARILPSDNLELTFSKTPG). Residues 333 to 525 (LHYTPTSILF…PISPVLGPNN (193 aa)) lie on the Cytoplasmic side of the membrane. 354–357 (HPFT) provides a ligand contact to FAD. NAD(+) is bound at residue 400 to 403 (GPYG). A helical transmembrane segment spans residues 526–548 (FLWLGVVILSSFVMFLLLIGIVT). Residues 549 to 568 (RYYIYPVDHNTGSIYNFSYR) are Lumenal-facing. A helical membrane pass occupies residues 569–590 (GLWDMFLGSACIFISSSVVFLW). The Cytoplasmic portion of the chain corresponds to 591–699 (RKKQNKEGDK…LHFEAISFNW (109 aa)).

The protein belongs to the ferric reductase (FRE) family. It depends on FAD as a cofactor. As to expression, expressed in siliques. Detected at low levels in roots, cotyledon veins and shoots.

It localises to the membrane. The enzyme catalyses 2 a Fe(II)-siderophore + NAD(+) + H(+) = 2 a Fe(III)-siderophore + NADH. Its function is as follows. Ferric chelate reductase. May participate in the transport of electrons to a Fe(3+) ion via FAD and heme intermediates. May function as root surface cupric chelate reductase and participate in the reduction of Cu(2+), for Cu(+) acquisition via Cu(+) transporters in response to copper deficiency. This is Ferric reduction oxidase 4 (FRO4) from Arabidopsis thaliana (Mouse-ear cress).